A 277-amino-acid chain; its full sequence is Putative phosphoenolpyruvate synthase regulatory protein (277 aa).

157–164 (GVSRCGKT) lines the ADP pocket.

It belongs to the pyruvate, phosphate/water dikinase regulatory protein family. PSRP subfamily.

It catalyses the reaction [pyruvate, water dikinase] + ADP = [pyruvate, water dikinase]-phosphate + AMP + H(+). The enzyme catalyses [pyruvate, water dikinase]-phosphate + phosphate + H(+) = [pyruvate, water dikinase] + diphosphate. In terms of biological role, bifunctional serine/threonine kinase and phosphorylase involved in the regulation of the phosphoenolpyruvate synthase (PEPS) by catalyzing its phosphorylation/dephosphorylation. The chain is Putative phosphoenolpyruvate synthase regulatory protein from Citrobacter koseri (strain ATCC BAA-895 / CDC 4225-83 / SGSC4696).